The following is a 114-amino-acid chain: Large ribosomal subunit protein uL22 (114 aa).

Belongs to the universal ribosomal protein uL22 family. Part of the 50S ribosomal subunit.

Functionally, this protein binds specifically to 23S rRNA; its binding is stimulated by other ribosomal proteins, e.g. L4, L17, and L20. It is important during the early stages of 50S assembly. It makes multiple contacts with different domains of the 23S rRNA in the assembled 50S subunit and ribosome. Its function is as follows. The globular domain of the protein is located near the polypeptide exit tunnel on the outside of the subunit, while an extended beta-hairpin is found that lines the wall of the exit tunnel in the center of the 70S ribosome. This Streptococcus sanguinis (strain SK36) protein is Large ribosomal subunit protein uL22.